The sequence spans 174 residues: NADH-quinone oxidoreductase subunit B 1 (174 aa).

Residues Cys-38, Cys-39, Cys-104, and Cys-133 each coordinate [4Fe-4S] cluster.

It belongs to the complex I 20 kDa subunit family. NDH-1 is composed of 14 different subunits. Subunits NuoB, C, D, E, F, and G constitute the peripheral sector of the complex. [4Fe-4S] cluster serves as cofactor.

The protein resides in the cell membrane. It carries out the reaction a quinone + NADH + 5 H(+)(in) = a quinol + NAD(+) + 4 H(+)(out). In terms of biological role, NDH-1 shuttles electrons from NADH, via FMN and iron-sulfur (Fe-S) centers, to quinones in the respiratory chain. The immediate electron acceptor for the enzyme in this species is believed to be ubiquinone. Couples the redox reaction to proton translocation (for every two electrons transferred, four hydrogen ions are translocated across the cytoplasmic membrane), and thus conserves the redox energy in a proton gradient. The chain is NADH-quinone oxidoreductase subunit B 1 from Chloroflexus aggregans (strain MD-66 / DSM 9485).